Here is a 574-residue protein sequence, read N- to C-terminus: Septation ring formation regulator EzrA (574 aa).

Residues 1-7 lie on the Extracellular side of the membrane; that stretch reads MSIGLVI. Residues 8–26 traverse the membrane as a helical segment; sequence LVAVVALLLVVGYGTAVLM. 5 coiled-coil regions span residues 26-47, 105-189, 258-346, 375-415, and 455-494; these read MRKR…LYNL, KAKH…QFVT, ESRF…FLIS, SETK…IEKD, and STSN…LEEE. The Cytoplasmic portion of the chain corresponds to 27–574; that stretch reads RKRNEALLQN…YEKTRENIRF (548 aa).

Belongs to the EzrA family.

It localises to the cell membrane. Functionally, negative regulator of FtsZ ring formation; modulates the frequency and position of FtsZ ring formation. Inhibits FtsZ ring formation at polar sites. Interacts either with FtsZ or with one of its binding partners to promote depolymerization. The sequence is that of Septation ring formation regulator EzrA from Streptococcus sanguinis (strain SK36).